A 142-amino-acid chain; its full sequence is Large ribosomal subunit protein uL13 (142 aa).

This sequence belongs to the universal ribosomal protein uL13 family. As to quaternary structure, part of the 50S ribosomal subunit.

Functionally, this protein is one of the early assembly proteins of the 50S ribosomal subunit, although it is not seen to bind rRNA by itself. It is important during the early stages of 50S assembly. The chain is Large ribosomal subunit protein uL13 from Psychrobacter arcticus (strain DSM 17307 / VKM B-2377 / 273-4).